The following is a 338-amino-acid chain: Lipoyl synthase (338 aa).

The interval 1-22 is disordered; that stretch reads MTTVQEAVPNLIPTQDVTPRPA. [4Fe-4S] cluster is bound by residues Cys-84, Cys-89, Cys-95, Cys-110, Cys-114, Cys-117, and Ser-324. The Radical SAM core domain occupies 96–313; that stretch reads FSGGTATFMI…AEEGYKMGFK (218 aa).

The protein belongs to the radical SAM superfamily. Lipoyl synthase family. It depends on [4Fe-4S] cluster as a cofactor.

Its subcellular location is the cytoplasm. The catalysed reaction is [[Fe-S] cluster scaffold protein carrying a second [4Fe-4S](2+) cluster] + N(6)-octanoyl-L-lysyl-[protein] + 2 oxidized [2Fe-2S]-[ferredoxin] + 2 S-adenosyl-L-methionine + 4 H(+) = [[Fe-S] cluster scaffold protein] + N(6)-[(R)-dihydrolipoyl]-L-lysyl-[protein] + 4 Fe(3+) + 2 hydrogen sulfide + 2 5'-deoxyadenosine + 2 L-methionine + 2 reduced [2Fe-2S]-[ferredoxin]. The protein operates within protein modification; protein lipoylation via endogenous pathway; protein N(6)-(lipoyl)lysine from octanoyl-[acyl-carrier-protein]: step 2/2. Its function is as follows. Catalyzes the radical-mediated insertion of two sulfur atoms into the C-6 and C-8 positions of the octanoyl moiety bound to the lipoyl domains of lipoate-dependent enzymes, thereby converting the octanoylated domains into lipoylated derivatives. The sequence is that of Lipoyl synthase from Pseudomonas entomophila (strain L48).